The chain runs to 303 residues: 2-phospho-L-lactate transferase (303 aa).

7,8-didemethyl-8-hydroxy-5-deazariboflavin-binding residues include D48 and K87.

Belongs to the CofD family. Homodimer. Mg(2+) is required as a cofactor.

The enzyme catalyses (2S)-lactyl-2-diphospho-5'-guanosine + 7,8-didemethyl-8-hydroxy-5-deazariboflavin = oxidized coenzyme F420-0 + GMP + H(+). It participates in cofactor biosynthesis; coenzyme F420 biosynthesis. In terms of biological role, catalyzes the transfer of the 2-phospholactate moiety from (2S)-lactyl-2-diphospho-5'-guanosine to 7,8-didemethyl-8-hydroxy-5-deazariboflavin (FO) with the formation of oxidized coenzyme F420-0 and GMP. This is 2-phospho-L-lactate transferase from Methanosarcina mazei (strain ATCC BAA-159 / DSM 3647 / Goe1 / Go1 / JCM 11833 / OCM 88) (Methanosarcina frisia).